The primary structure comprises 558 residues: Dihydroxy-acid dehydratase (558 aa).

Cys-49 contacts [2Fe-2S] cluster. Mg(2+) is bound at residue Asp-81. Cys-122 contacts [2Fe-2S] cluster. Mg(2+)-binding residues include Asp-123 and Lys-124. Lys-124 carries the post-translational modification N6-carboxylysine. Cys-194 is a [2Fe-2S] cluster binding site. Glu-446 provides a ligand contact to Mg(2+). Residue Ser-472 is the Proton acceptor of the active site.

Belongs to the IlvD/Edd family. Homodimer. [2Fe-2S] cluster serves as cofactor. Mg(2+) is required as a cofactor.

It carries out the reaction (2R)-2,3-dihydroxy-3-methylbutanoate = 3-methyl-2-oxobutanoate + H2O. The enzyme catalyses (2R,3R)-2,3-dihydroxy-3-methylpentanoate = (S)-3-methyl-2-oxopentanoate + H2O. It participates in amino-acid biosynthesis; L-isoleucine biosynthesis; L-isoleucine from 2-oxobutanoate: step 3/4. Its pathway is amino-acid biosynthesis; L-valine biosynthesis; L-valine from pyruvate: step 3/4. Its function is as follows. Functions in the biosynthesis of branched-chain amino acids. Catalyzes the dehydration of (2R,3R)-2,3-dihydroxy-3-methylpentanoate (2,3-dihydroxy-3-methylvalerate) into 2-oxo-3-methylpentanoate (2-oxo-3-methylvalerate) and of (2R)-2,3-dihydroxy-3-methylbutanoate (2,3-dihydroxyisovalerate) into 2-oxo-3-methylbutanoate (2-oxoisovalerate), the penultimate precursor to L-isoleucine and L-valine, respectively. The protein is Dihydroxy-acid dehydratase of Synechococcus sp. (strain RCC307).